The sequence spans 165 residues: Nucleotide-binding protein Pro_0479 (165 aa).

This sequence belongs to the YajQ family.

Nucleotide-binding protein. The polypeptide is Nucleotide-binding protein Pro_0479 (Prochlorococcus marinus (strain SARG / CCMP1375 / SS120)).